Consider the following 255-residue polypeptide: NAD kinase (255 aa).

Aspartate 44 acts as the Proton acceptor in catalysis. Residues 44 to 45 (DG), histidine 49, 114 to 115 (NE), aspartate 144, alanine 152, 155 to 160 (SAYNLS), and glutamine 216 contribute to the NAD(+) site.

It belongs to the NAD kinase family. A divalent metal cation serves as cofactor.

It localises to the cytoplasm. It carries out the reaction NAD(+) + ATP = ADP + NADP(+) + H(+). Functionally, involved in the regulation of the intracellular balance of NAD and NADP, and is a key enzyme in the biosynthesis of NADP. Catalyzes specifically the phosphorylation on 2'-hydroxyl of the adenosine moiety of NAD to yield NADP. In Rickettsia peacockii (strain Rustic), this protein is NAD kinase.